The sequence spans 245 residues: MDDASTLIDVKEYPGTEVQKNRVLTLEEWREKWVDGKIGFHQEQGHQLLKKHLDTFLKGENVLRVFFPLCGKAVEMKWFADRGHCVVGVEISELGIREFFIEQNLSYSEEPIMEIPGAKVFKSSSGNISLYCCNLFDLPRVNIGKFDRIWDRGALVAVNPGDRKCYTDIMLSLTRKGFRYLLAVLSYDPTKHPGPPFYVPDAEIKNLFGSTCNIHCLEKVDVFEERHKSWGIDYIVEKLYLLTEK.

S-adenosyl-L-methionine is bound at residue 29 to 40 (WREKWVDGKIGF). A substrate-binding site is contributed by F40. Residue K58 is modified to N6-acetyllysine. Positions 69, 90, and 152 each coordinate S-adenosyl-L-methionine.

This sequence belongs to the class I-like SAM-binding methyltransferase superfamily. TPMT family. Monomer.

It localises to the cytoplasm. It carries out the reaction S-adenosyl-L-methionine + a thiopurine = S-adenosyl-L-homocysteine + a thiopurine S-methylether.. This chain is Thiopurine S-methyltransferase (TPMT), found in Panthera pardus (Leopard).